A 251-amino-acid polypeptide reads, in one-letter code: Haloacid dehalogenase-like hydrolase domain-containing protein 3 (251 aa).

Lysine 15 is modified (N6-acetyllysine; alternate). Position 15 is an N6-succinyllysine; alternate (lysine 15).

The protein belongs to the HAD-like hydrolase superfamily.

The polypeptide is Haloacid dehalogenase-like hydrolase domain-containing protein 3 (HDHD3) (Homo sapiens (Human)).